A 73-amino-acid chain; its full sequence is Large ribosomal subunit protein bL31 (73 aa).

This sequence belongs to the bacterial ribosomal protein bL31 family. Type A subfamily. Part of the 50S ribosomal subunit.

In terms of biological role, binds the 23S rRNA. The sequence is that of Large ribosomal subunit protein bL31 from Paracoccus denitrificans (strain Pd 1222).